The sequence spans 688 residues: Polyribonucleotide nucleotidyltransferase (688 aa).

Asp484 and Asp490 together coordinate Mg(2+). One can recognise a KH domain in the interval 550-609 (PTTEIFNVAPDKIVEIIGQGGRVIREIVEKFEVKIDLNKPSGEVKIMGNKERVLKTKEFI). Positions 626–688 (DEVLEAQVKR…NKGKIALDLA (63 aa)) constitute an S1 motif domain.

It belongs to the polyribonucleotide nucleotidyltransferase family. Requires Mg(2+) as cofactor.

It is found in the cytoplasm. It catalyses the reaction RNA(n+1) + phosphate = RNA(n) + a ribonucleoside 5'-diphosphate. Its function is as follows. Involved in mRNA degradation. Catalyzes the phosphorolysis of single-stranded polyribonucleotides processively in the 3'- to 5'-direction. The protein is Polyribonucleotide nucleotidyltransferase of Helicobacter pylori (strain Shi470).